The primary structure comprises 147 residues: MKYMTVTDLNNAGATVIGTIKGGEWFLGTPHKDILSKPGFYFLVSEFDGSCVSARFYVGNQRSKQGFSAVLSHIRQRRSQLARTIANNNMAYTVFYLPASKMKPLTTGFGKGQLALAFTRNHHSEYQTLEEMNRMLADNFKFVLQAY.

Functionally, disorganizes the host nucleoid and inhibits replication, but without host DNA cleavage or degradation. Only the architecture of the nucleoid is affected. May act on the host chromosomal sequences that determine the structure of the nucleoid. Binds to dsDNA but not to ssDNA. This chain is Nucleoid disruption protein (ndd), found in Enterobacteria phage RB70 (Bacteriophage RB70).